Reading from the N-terminus, the 314-residue chain is DNA-directed RNA polymerase subunit alpha (314 aa).

Positions 1–228 (MIEIEKPRIE…EHLNIFVDLT (228 aa)) are alpha N-terminal domain (alpha-NTD). The segment at 245 to 314 (KEKVLEMSIE…DLGLGLRKED (70 aa)) is alpha C-terminal domain (alpha-CTD).

This sequence belongs to the RNA polymerase alpha chain family. Homodimer. The RNAP catalytic core consists of 2 alpha, 1 beta, 1 beta' and 1 omega subunit. When a sigma factor is associated with the core the holoenzyme is formed, which can initiate transcription.

The enzyme catalyses RNA(n) + a ribonucleoside 5'-triphosphate = RNA(n+1) + diphosphate. Its function is as follows. DNA-dependent RNA polymerase catalyzes the transcription of DNA into RNA using the four ribonucleoside triphosphates as substrates. This Macrococcus caseolyticus (strain JCSC5402) (Macrococcoides caseolyticum) protein is DNA-directed RNA polymerase subunit alpha.